A 427-amino-acid polypeptide reads, in one-letter code: 3-deoxy-D-manno-octulosonic acid transferase (427 aa).

Residues 4–24 (FFYTSLLLICQPLILCFIGLL) traverse the membrane as a helical; Signal-anchor segment. Glu-62 serves as the catalytic Proton acceptor. Residues 270–271 (PR), 311–313 (MGE), and 337–340 (NPLE) contribute to the CMP site.

The protein belongs to the glycosyltransferase group 1 family. Glycosyltransferase 30 subfamily.

The protein resides in the cell inner membrane. It catalyses the reaction lipid IVA (E. coli) + CMP-3-deoxy-beta-D-manno-octulosonate = alpha-Kdo-(2-&gt;6)-lipid IVA (E. coli) + CMP + H(+). The protein operates within bacterial outer membrane biogenesis; LPS core biosynthesis. Functionally, involved in lipopolysaccharide (LPS) biosynthesis. Catalyzes the transfer of a single 3-deoxy-D-manno-octulosonate (Kdo) residue from CMP-Kdo to lipid IV(A), the tetraacyldisaccharide-1,4'-bisphosphate precursor of lipid A. Is strictly monofunctional, i.e. is capable of adding only a single Kdo residue to the acceptor lipid. This Haemophilus influenzae (strain ATCC 51907 / DSM 11121 / KW20 / Rd) protein is 3-deoxy-D-manno-octulosonic acid transferase (waaA).